Reading from the N-terminus, the 64-residue chain is Beta-insect excitatory toxin OdTx12 (64 aa).

The 59-residue stretch at 1–59 (QSTGGKAPECLLSNYCNNECTKVHYADKGYCCLLSCYCFGLSDDKKVLEISDSRKKYCD) folds into the LCN-type CS-alpha/beta domain. Disulfide bonds link Cys10/Cys31, Cys16/Cys36, Cys20/Cys38, and Cys32/Cys58.

The protein belongs to the long (4 C-C) scorpion toxin superfamily. Sodium channel inhibitor family. Beta subfamily. Expressed by the venom gland.

The protein localises to the secreted. In terms of biological role, excitatory insect beta-toxins induce a spastic paralysis. They bind voltage-independently at site-4 of sodium channels (Nav) and shift the voltage of activation toward more negative potentials thereby affecting sodium channel activation and promoting spontaneous and repetitive firing. In vivo, this recombinant protein is lethal to Locusta migratoria larvae after injection, but has no significant effect when orally administered. Is not toxic to mice after intracerebroventricular injection. The polypeptide is Beta-insect excitatory toxin OdTx12 (Odontobuthus doriae (Yellow Iranian scorpion)).